The following is a 181-amino-acid chain: ATP synthase subunit b 2 (181 aa).

Positions 1-18 (MATTTHDAGHGAAEAAHG) are enriched in low complexity. A disordered region spans residues 1-20 (MATTTHDAGHGAAEAAHGSS). A helical transmembrane segment spans residues 34–54 (IFWLLVTLVVIYLILSRIALP).

It belongs to the ATPase B chain family. F-type ATPases have 2 components, F(1) - the catalytic core - and F(0) - the membrane proton channel. F(1) has five subunits: alpha(3), beta(3), gamma(1), delta(1), epsilon(1). F(0) has three main subunits: a(1), b(2) and c(10-14). The alpha and beta chains form an alternating ring which encloses part of the gamma chain. F(1) is attached to F(0) by a central stalk formed by the gamma and epsilon chains, while a peripheral stalk is formed by the delta and b chains.

It localises to the cell inner membrane. Functionally, f(1)F(0) ATP synthase produces ATP from ADP in the presence of a proton or sodium gradient. F-type ATPases consist of two structural domains, F(1) containing the extramembraneous catalytic core and F(0) containing the membrane proton channel, linked together by a central stalk and a peripheral stalk. During catalysis, ATP synthesis in the catalytic domain of F(1) is coupled via a rotary mechanism of the central stalk subunits to proton translocation. Its function is as follows. Component of the F(0) channel, it forms part of the peripheral stalk, linking F(1) to F(0). The b'-subunit is a diverged and duplicated form of b found in plants and photosynthetic bacteria. In Ruegeria sp. (strain TM1040) (Silicibacter sp.), this protein is ATP synthase subunit b 2 (atpF2).